A 123-amino-acid chain; its full sequence is MATINQLVRQPRKRIVEKSDVPALQNCPQRRGVCTRVYTTTPKKPNSALRKVCRVRLTNGFEVSSYIGGEGHNLQEHSVVLIRGGRVKDLPGVRYHTVRGSLDTSGVKGRNQGRSKYGTKKPK.

Asp89 bears the 3-methylthioaspartic acid mark. Residues 100–123 (GSLDTSGVKGRNQGRSKYGTKKPK) form a disordered region. Positions 111 to 123 (NQGRSKYGTKKPK) are enriched in basic residues.

Belongs to the universal ribosomal protein uS12 family. Part of the 30S ribosomal subunit. Contacts proteins S8 and S17. May interact with IF1 in the 30S initiation complex.

Its function is as follows. With S4 and S5 plays an important role in translational accuracy. Functionally, interacts with and stabilizes bases of the 16S rRNA that are involved in tRNA selection in the A site and with the mRNA backbone. Located at the interface of the 30S and 50S subunits, it traverses the body of the 30S subunit contacting proteins on the other side and probably holding the rRNA structure together. The combined cluster of proteins S8, S12 and S17 appears to hold together the shoulder and platform of the 30S subunit. This Pseudomonas syringae pv. syringae (strain B728a) protein is Small ribosomal subunit protein uS12.